The sequence spans 571 residues: Proline--tRNA ligase (571 aa).

This sequence belongs to the class-II aminoacyl-tRNA synthetase family. ProS type 1 subfamily. As to quaternary structure, homodimer.

The protein resides in the cytoplasm. The catalysed reaction is tRNA(Pro) + L-proline + ATP = L-prolyl-tRNA(Pro) + AMP + diphosphate. Catalyzes the attachment of proline to tRNA(Pro) in a two-step reaction: proline is first activated by ATP to form Pro-AMP and then transferred to the acceptor end of tRNA(Pro). As ProRS can inadvertently accommodate and process non-cognate amino acids such as alanine and cysteine, to avoid such errors it has two additional distinct editing activities against alanine. One activity is designated as 'pretransfer' editing and involves the tRNA(Pro)-independent hydrolysis of activated Ala-AMP. The other activity is designated 'posttransfer' editing and involves deacylation of mischarged Ala-tRNA(Pro). The misacylated Cys-tRNA(Pro) is not edited by ProRS. The protein is Proline--tRNA ligase of Pseudomonas fluorescens (strain Pf0-1).